Reading from the N-terminus, the 428-residue chain is Glutamate-1-semialdehyde 2,1-aminomutase (428 aa).

K267 bears the N6-(pyridoxal phosphate)lysine mark.

This sequence belongs to the class-III pyridoxal-phosphate-dependent aminotransferase family. HemL subfamily. In terms of assembly, homodimer. Requires pyridoxal 5'-phosphate as cofactor.

It localises to the cytoplasm. The catalysed reaction is (S)-4-amino-5-oxopentanoate = 5-aminolevulinate. It functions in the pathway porphyrin-containing compound metabolism; protoporphyrin-IX biosynthesis; 5-aminolevulinate from L-glutamyl-tRNA(Glu): step 2/2. The protein is Glutamate-1-semialdehyde 2,1-aminomutase of Flavobacterium psychrophilum (strain ATCC 49511 / DSM 21280 / CIP 103535 / JIP02/86).